A 192-amino-acid polypeptide reads, in one-letter code: MMISCTRTAILPLRRRLMTASTAYPIKFASSIIPGYGRGSADLGIPTANIPIDDVPVLDALDTGIYYGLVQILKTDKPSEKKTSEFQKDRVVDFQYTNKLNDQEINAVLPMVMSVGWNPFYKNDQKSAEIHIIHKFAHTFYGASIKVMVLGYLRPEKNFTSLEALVDEIHNDIKVSEEKMEGTREKKDQFWQ.

Positions 47 and 49 each coordinate Mg(2+). E129 (nucleophile) is an active-site residue.

The protein belongs to the flavokinase family. Zn(2+) is required as a cofactor. Requires Mg(2+) as cofactor.

The catalysed reaction is riboflavin + ATP = FMN + ADP + H(+). It participates in cofactor biosynthesis; FMN biosynthesis; FMN from riboflavin (ATP route): step 1/1. Its function is as follows. Catalyzes the phosphorylation of riboflavin (vitamin B2) to form flavin mononucleotide (FMN) coenzyme. In Yarrowia lipolytica (strain CLIB 122 / E 150) (Yeast), this protein is Riboflavin kinase (FMN1).